Consider the following 2346-residue polypeptide: N-benzoylphenylalaninol synthetase apmA (2346 aa).

The segment at 263–652 (ESAAQKSPDA…GRKDLQVKIR (390 aa)) is adenylation 1. Residues 784-860 (MPTTTTEMTL…DMAKAMTSTR (77 aa)) form the Carrier 1 domain. S821 carries the post-translational modification O-(pantetheine 4'-phosphoryl)serine. Residues 896–1306 (QDAYPCSPLQ…ISPQDKENLL (411 aa)) are condensation. An adenylation 2 region spans residues 1330 to 1713 (SQPNAPAICA…GRKDTQVKIR (384 aa)). One can recognise a Carrier 2 domain in the interval 1842 to 1924 (SALRASEDKA…GLAAFIDAEL (83 aa)). The residue at position 1883 (S1883) is an O-(pantetheine 4'-phosphoryl)serine. A reductase (R) domain region spans residues 1960–2311 (VTGGTGFLGT…RNVQFLVEAG (352 aa)).

It belongs to the NRP synthetase family.

It carries out the reaction benzoate + L-phenylalanine + 2 AH2 + 2 ATP = N-benzoyl-L-phenylalaninol + 2 A + 2 AMP + 2 diphosphate + H(+). Its pathway is secondary metabolite biosynthesis. Functionally, nonribosomal peptide synthase; part of the gene cluster that mediates the biosynthesis of asperphenamate, a rare linear amino acid ester that exhibits antitumor activity towards a number of cell lines. The structure of asperphenamate contains two subunits, N-benzoylphenylalanine and N-benzoylphenylalaninol, which are connected by an inter-molecular ester bond. The first step of asperphenamate biosynthesis is the generation of N-benzoylphenylalaninol by the nonribosomal peptide synthase apmA. Using phenylalanine and benzoic acid as substrates, apmA catalyzes amide bond formation and tethers the intermediate into the NRPS chain. Then, the terminal R domain of apmA catalyzes the reduction reaction to get the shunt product N-benzoylphenylalaninol. Subsequently, the nonribosomal peptide synthase apmB activates the same substrates as does apmA (phenylalanine and benzoic acid) to produce N-benzoylphenylalanine before condensing N-benzoylphenylalanine and N-benzoylphenylalaninol to release asperphenamate. This is N-benzoylphenylalaninol synthetase apmA from Penicillium brevicompactum.